The following is a 146-amino-acid chain: Hemoglobin subunit beta (146 aa).

At valine 1 the chain carries N-acetylvaline. Residues histidine 2 to histidine 146 enclose the Globin domain. Threonine 12 bears the Phosphothreonine mark. Serine 44 carries the post-translational modification Phosphoserine. At lysine 59 the chain carries N6-acetyllysine. Histidine 63 contributes to the heme b binding site. Lysine 82 is modified (N6-acetyllysine). Position 92 (histidine 92) interacts with heme b. Cysteine 93 is subject to S-nitrosocysteine. An N6-acetyllysine modification is found at lysine 144.

The protein belongs to the globin family. As to quaternary structure, heterotetramer of two alpha chains and two beta chains. Red blood cells.

In terms of biological role, involved in oxygen transport from the lung to the various peripheral tissues. This chain is Hemoglobin subunit beta (HBB), found in Mustela lutreola (European mink).